A 130-amino-acid chain; its full sequence is Large ribosomal subunit protein bL20 (130 aa).

This sequence belongs to the bacterial ribosomal protein bL20 family.

Its function is as follows. Binds directly to 23S ribosomal RNA and is necessary for the in vitro assembly process of the 50S ribosomal subunit. It is not involved in the protein synthesizing functions of that subunit. The polypeptide is Large ribosomal subunit protein bL20 (Salinispora arenicola (strain CNS-205)).